A 632-amino-acid polypeptide reads, in one-letter code: Probable potassium transport system protein Kup (632 aa).

12 helical membrane passes run 19–39, 57–77, 111–131, 147–167, 175–195, 213–233, 257–277, 286–306, 347–367, 376–396, 404–424, and 429–449; these read LLCL…PLYV, VIGI…LKYV, ILFL…VITP, PLLQ…LFML, IGAL…LVGL, AFAF…AVVL, WYGG…ALLL, PFFL…ATAA, IYIP…VLGF, AYGV…FFVL, FLLG…FFSA, and VAQG…IMIT.

It belongs to the HAK/KUP transporter (TC 2.A.72) family.

It localises to the cell inner membrane. The catalysed reaction is K(+)(in) + H(+)(in) = K(+)(out) + H(+)(out). Transport of potassium into the cell. Likely operates as a K(+):H(+) symporter. The sequence is that of Probable potassium transport system protein Kup from Nitrosospira multiformis (strain ATCC 25196 / NCIMB 11849 / C 71).